We begin with the raw amino-acid sequence, 220 residues long: Adenylate kinase (220 aa).

Residue 12–17 (GAGKGT) coordinates ATP. The NMP stretch occupies residues 32–62 (STGDIFRDIVKKENDELGKKIKEIMEKGELV). Residues Thr-33, Arg-38, 60–62 (ELV), 88–91 (GYPR), and Gln-95 each bind AMP. Positions 129-166 (SRRICPKCGRIYNMISLPPKEDELCDDCKVKLVQRDDD) are LID. Position 130 (Arg-130) interacts with ATP. 2 residues coordinate Zn(2+): Cys-133 and Cys-136. 139–140 (IY) serves as a coordination point for ATP. Residues Cys-153 and Cys-156 each coordinate Zn(2+). AMP-binding residues include Arg-163 and Arg-174. An ATP-binding site is contributed by Ile-202.

The protein belongs to the adenylate kinase family. In terms of assembly, monomer.

It localises to the cytoplasm. It carries out the reaction AMP + ATP = 2 ADP. It functions in the pathway purine metabolism; AMP biosynthesis via salvage pathway; AMP from ADP: step 1/1. Catalyzes the reversible transfer of the terminal phosphate group between ATP and AMP. Plays an important role in cellular energy homeostasis and in adenine nucleotide metabolism. This Thermotoga neapolitana protein is Adenylate kinase.